The chain runs to 359 residues: Methylthioribose-1-phosphate isomerase (359 aa).

Substrate is bound by residues 52–54 (RGA), R90, and Q200. The active-site Proton donor is D241. 251-252 (NK) contacts substrate.

Belongs to the eIF-2B alpha/beta/delta subunits family. MtnA subfamily.

The enzyme catalyses 5-(methylsulfanyl)-alpha-D-ribose 1-phosphate = 5-(methylsulfanyl)-D-ribulose 1-phosphate. Its pathway is amino-acid biosynthesis; L-methionine biosynthesis via salvage pathway; L-methionine from S-methyl-5-thio-alpha-D-ribose 1-phosphate: step 1/6. In terms of biological role, catalyzes the interconversion of methylthioribose-1-phosphate (MTR-1-P) into methylthioribulose-1-phosphate (MTRu-1-P). This Sulfurimonas denitrificans (strain ATCC 33889 / DSM 1251) (Thiomicrospira denitrificans (strain ATCC 33889 / DSM 1251)) protein is Methylthioribose-1-phosphate isomerase.